A 336-amino-acid chain; its full sequence is tRNA N6-adenosine threonylcarbamoyltransferase (336 aa).

Residues histidine 112 and histidine 116 each contribute to the Fe cation site. Residues leucine 136 to glycine 140, aspartate 169, glycine 182, and asparagine 276 each bind substrate. Aspartate 304 provides a ligand contact to Fe cation.

It belongs to the KAE1 / TsaD family. Requires Fe(2+) as cofactor.

The protein resides in the cytoplasm. The enzyme catalyses L-threonylcarbamoyladenylate + adenosine(37) in tRNA = N(6)-L-threonylcarbamoyladenosine(37) in tRNA + AMP + H(+). Required for the formation of a threonylcarbamoyl group on adenosine at position 37 (t(6)A37) in tRNAs that read codons beginning with adenine. Is involved in the transfer of the threonylcarbamoyl moiety of threonylcarbamoyl-AMP (TC-AMP) to the N6 group of A37, together with TsaE and TsaB. TsaD likely plays a direct catalytic role in this reaction. The polypeptide is tRNA N6-adenosine threonylcarbamoyltransferase (Francisella philomiragia subsp. philomiragia (strain ATCC 25017 / CCUG 19701 / FSC 153 / O#319-036)).